A 779-amino-acid polypeptide reads, in one-letter code: Probable glutamine--tRNA ligase (779 aa).

Residues 268–270 (EPN) and 274–280 (HIGHAKA) contribute to the ATP site. The L-glutamine site is built by Asp300 and Tyr440. ATP-binding positions include Thr459, 488 to 489 (RL), and 496 to 498 (LSK).

Belongs to the class-I aminoacyl-tRNA synthetase family.

It carries out the reaction tRNA(Gln) + L-glutamine + ATP = L-glutaminyl-tRNA(Gln) + AMP + diphosphate. The chain is Probable glutamine--tRNA ligase (glnS) from Dictyostelium discoideum (Social amoeba).